Consider the following 272-residue polypeptide: F-actin-capping protein subunit beta (272 aa).

The protein belongs to the F-actin-capping protein beta subunit family. As to quaternary structure, component of the F-actin capping complex, composed of a heterodimer of an alpha and a beta subunit.

The protein resides in the cytoplasm. It localises to the cytoskeleton. In terms of biological role, F-actin-capping proteins bind in a Ca(2+)-independent manner to the fast growing ends of actin filaments (barbed end) thereby blocking the exchange of subunits at these ends. Unlike other capping proteins (such as gelsolin and severin), these proteins do not sever actin filaments. This Dictyostelium discoideum (Social amoeba) protein is F-actin-capping protein subunit beta (acpA).